Consider the following 388-residue polypeptide: Chorismate synthase (388 aa).

NADP(+) contacts are provided by Arg-39 and Arg-45. A disordered region spans residues 95–118 (EKNEKSRRVSRPRPGHADLVGGMK). Residues 130-132 (RSS), 251-252 (NA), Gly-296, 311-315 (KPIPT), and Arg-337 each bind FMN.

The protein belongs to the chorismate synthase family. Homotetramer. The cofactor is FMNH2.

The enzyme catalyses 5-O-(1-carboxyvinyl)-3-phosphoshikimate = chorismate + phosphate. The protein operates within metabolic intermediate biosynthesis; chorismate biosynthesis; chorismate from D-erythrose 4-phosphate and phosphoenolpyruvate: step 7/7. Catalyzes the anti-1,4-elimination of the C-3 phosphate and the C-6 proR hydrogen from 5-enolpyruvylshikimate-3-phosphate (EPSP) to yield chorismate, which is the branch point compound that serves as the starting substrate for the three terminal pathways of aromatic amino acid biosynthesis. This reaction introduces a second double bond into the aromatic ring system. The chain is Chorismate synthase from Listeria welshimeri serovar 6b (strain ATCC 35897 / DSM 20650 / CCUG 15529 / CIP 8149 / NCTC 11857 / SLCC 5334 / V8).